Here is a 222-residue protein sequence, read N- to C-terminus: MIRFEHVSKAYLGGRQALQGVTFHMQPGEMAFLTGHSGAGKSTLLKLICGIERPSAGKIWFSGHDITRLKNREVPFLRRQIGMIFQDHHLLMDRTVYDNVAIPLIIAGASGDDIRRRVSAALDKVGLLDKAKNFPIQLSGGEQQRVGIARAVVNKPAVLLADEPTGNLDDALSEGILRLFEEFNRVGVTVLMATHDINLISRRSYRMLTLSDGHLHGGVGHE.

The 221-residue stretch at Ile2–Glu222 folds into the ABC transporter domain. Gly35 to Ser42 is an ATP binding site.

Belongs to the ABC transporter superfamily. Homodimer. Forms a membrane-associated complex with FtsX.

The protein localises to the cell inner membrane. Functionally, part of the ABC transporter FtsEX involved in cellular division. Important for assembly or stability of the septal ring. The protein is Cell division ATP-binding protein FtsE (ftsE) of Escherichia coli O157:H7.